The chain runs to 265 residues: Pro-opiomelanocortin (265 aa).

The first 26 residues, 1-26, serve as a signal peptide directing secretion; sequence MPRLCSSRSGALLLALLLQASMEVRG. Intrachain disulfides connect Cys-28-Cys-50 and Cys-34-Cys-46. A glycan (O-linked (GalNAc...) threonine) is linked at Thr-71. Phe-87 is subject to Phenylalanine amide. A disordered region spans residues 89-138; that stretch reads RRNGSSSSGVGGAAQKREEEVAVGEGPGPRGDDAETGPREDKRSYSMEHF. Residue Asn-91 is glycosylated (N-linked (GlcNAc...) asparagine). A propeptide spanning residues 106–129 is cleaved from the precursor; that stretch reads EEEVAVGEGPGPRGDDAETGPRED. The span at 118–138 shows a compositional bias: basic and acidic residues; the sequence is RGDDAETGPREDKRSYSMEHF. The residue at position 132 (Ser-132) is an N-acetylserine; in Corticotropin. The residue at position 144 (Val-144) is a Valine amide. Ser-162 carries the phosphoserine modification. Glu-173 carries the post-translational modification Pyrrolidone carboxylic acid (Glu); partial. Residue Tyr-200 is modified to Sulfotyrosine. The disordered stretch occupies residues 209-240; sequence EAAEKKDSGPYKMEHFRWGSPPKDKRYGGFMT. The span at 210-235 shows a compositional bias: basic and acidic residues; it reads AAEKKDSGPYKMEHFRWGSPPKDKRY.

Belongs to the POMC family. In terms of processing, specific enzymatic cleavages at paired basic residues yield the different active peptides. In terms of tissue distribution, ACTH and MSH are produced by the pituitary gland.

It is found in the secreted. Stimulates the adrenal glands to release cortisol. Functionally, anorexigenic peptide. Increases the pigmentation of skin by increasing melanin production in melanocytes. Its function is as follows. Endogenous orexigenic opiate. In terms of biological role, endogenous opiate. The protein is Pro-opiomelanocortin (POMC) of Bos taurus (Bovine).